The following is a 571-amino-acid chain: Proline--tRNA ligase (571 aa).

The protein belongs to the class-II aminoacyl-tRNA synthetase family. ProS type 1 subfamily. Homodimer.

It is found in the cytoplasm. The catalysed reaction is tRNA(Pro) + L-proline + ATP = L-prolyl-tRNA(Pro) + AMP + diphosphate. Functionally, catalyzes the attachment of proline to tRNA(Pro) in a two-step reaction: proline is first activated by ATP to form Pro-AMP and then transferred to the acceptor end of tRNA(Pro). As ProRS can inadvertently accommodate and process non-cognate amino acids such as alanine and cysteine, to avoid such errors it has two additional distinct editing activities against alanine. One activity is designated as 'pretransfer' editing and involves the tRNA(Pro)-independent hydrolysis of activated Ala-AMP. The other activity is designated 'posttransfer' editing and involves deacylation of mischarged Ala-tRNA(Pro). The misacylated Cys-tRNA(Pro) is not edited by ProRS. This chain is Proline--tRNA ligase, found in Pseudomonas putida (strain ATCC 47054 / DSM 6125 / CFBP 8728 / NCIMB 11950 / KT2440).